A 108-amino-acid chain; its full sequence is Nucleoid-associated protein Bcen_6253 (108 aa).

The segment covering 85–95 has biased composition (polar residues); sequence ATSQEKMSGMT. Residues 85–108 are disordered; it reads ATSQEKMSGMTSGLPLPPGFKLPF. Positions 99-108 are enriched in pro residues; that stretch reads PLPPGFKLPF.

The protein belongs to the YbaB/EbfC family. Homodimer.

It localises to the cytoplasm. Its subcellular location is the nucleoid. Binds to DNA and alters its conformation. May be involved in regulation of gene expression, nucleoid organization and DNA protection. The polypeptide is Nucleoid-associated protein Bcen_6253 (Burkholderia orbicola (strain AU 1054)).